A 1774-amino-acid polypeptide reads, in one-letter code: Protein TIC 214 (1774 aa).

6 consecutive transmembrane segments (helical) span residues 19 to 39 (IINS…FSIG), 68 to 88 (FIAG…HLAL), 91 to 111 (PHTI…WNNH), 133 to 153 (VFLN…SSML), 176 to 196 (VGWL…LVWI), and 227 to 247 (IFSI…PSPI). Residues 254 to 268 (GTSETEERGGTKQDQ) show a composition bias toward basic and acidic residues. The segment at 254 to 275 (GTSETEERGGTKQDQEVSTEEA) is disordered.

It belongs to the TIC214 family. In terms of assembly, part of the Tic complex.

The protein resides in the plastid. The protein localises to the chloroplast inner membrane. Functionally, involved in protein precursor import into chloroplasts. May be part of an intermediate translocation complex acting as a protein-conducting channel at the inner envelope. The polypeptide is Protein TIC 214 (Aethionema cordifolium (Lebanon stonecress)).